Here is a 619-residue protein sequence, read N- to C-terminus: 1-deoxy-D-xylulose-5-phosphate synthase (619 aa).

Residues histidine 74 and 115-117 (GHS) each bind thiamine diphosphate. Mg(2+) is bound at residue aspartate 146. Residues 147-148 (GA), asparagine 175, and tyrosine 285 each bind thiamine diphosphate. A Mg(2+)-binding site is contributed by asparagine 175. Positions 289–310 (EKSPSKYHGIPPSNDKKEEPNK) are disordered. Glutamate 365 serves as a coordination point for thiamine diphosphate.

Belongs to the transketolase family. DXPS subfamily. As to quaternary structure, homodimer. Requires Mg(2+) as cofactor. Thiamine diphosphate is required as a cofactor.

It carries out the reaction D-glyceraldehyde 3-phosphate + pyruvate + H(+) = 1-deoxy-D-xylulose 5-phosphate + CO2. It functions in the pathway metabolic intermediate biosynthesis; 1-deoxy-D-xylulose 5-phosphate biosynthesis; 1-deoxy-D-xylulose 5-phosphate from D-glyceraldehyde 3-phosphate and pyruvate: step 1/1. Catalyzes the acyloin condensation reaction between C atoms 2 and 3 of pyruvate and glyceraldehyde 3-phosphate to yield 1-deoxy-D-xylulose-5-phosphate (DXP). This Clostridium botulinum (strain Alaska E43 / Type E3) protein is 1-deoxy-D-xylulose-5-phosphate synthase.